Reading from the N-terminus, the 140-residue chain is Midkine (140 aa).

An N-terminal signal peptide occupies residues 1-22 (MQHRGFFLLALLALLVVTSAVA). Intrachain disulfides connect Cys34–Cys58, Cys42–Cys67, Cys49–Cys71, Cys81–Cys113, and Cys91–Cys123.

Belongs to the pleiotrophin family. In terms of assembly, homodimer. Interacts with ALK. Interacts with LRP1; promotes neuronal survival. Interacts with LRP2. Interacts with NCAM1. Interacts (via C-terminal) with PTPRZ1 (via chondroitin sulfate chains); this interaction is inhibited by PTN; this interaction promotes neuronal migration. Interacts with NCL; this interaction promotes NCL clustering and lateral movements of this complex into lipid rafts leading to MDK internalization. Interacts with LRP6 and LRP8: this interaction is calcium dependent. Interacts with ITGA4. Interacts with ITGA6. Interacts with ITGB1. Interacts with ITGA4:ITGB1 complex; this interaction mediates MDK-induced osteoblast cells migration through PXN phosphorylation. Interacts with ITGA6:ITGB1 complex; this interaction mediates MDK-induced neurite outgrowth. Interacts with NOTCH2; this interactio mediates a nuclear accumulation of NOTCH2 and therefore activation of NOTCH2 signaling leading to interaction between HES1 and STAT3. Interacts with GPC2 (via heparan sulfate chain); this interaction is inhibited by heparin followed by chondroitin sulfate E; this interaction induces GPC2 clustering through heparan sulfate chain; this interaction induces neuronal cell adhesion and neurite outgrowth. Interacts with SDC3; this interaction induces SDC3 clustering; this interaction induces neuronal cell adhesion and neurite outgrowth. Interacts with SDC1. Interacts with CSPG5; this interaction promotes elongation of oligodendroglial precursor-like cells. In terms of tissue distribution, expressed in the follicular epithelium and granulosa cells of the ovary.

Its subcellular location is the secreted. In terms of biological role, secreted protein that functions as a cytokine and growth factor and mediates its signal through cell-surface proteoglycan and non-proteoglycan receptors. Binds cell-surface proteoglycan receptors via their chondroitin sulfate (CS) groups. Thereby regulates many processes like inflammatory response, cell proliferation, cell adhesion, cell growth, cell survival, tissue regeneration, cell differentiation and cell migration. Participates in inflammatory processes by exerting two different activities. Firstly, mediates neutrophils and macrophages recruitment to the sites of inflammation both by direct action by cooperating namely with ITGB2 via LRP1 and by inducing chemokine expression. This inflammation can be accompanied by epithelial cell survival and smooth muscle cell migration after renal and vessel damage, respectively. Secondly, suppresses the development of tolerogenic dendric cells thereby inhibiting the differentiation of regulatory T cells and also promote T cell expansion through NFAT signaling and Th1 cell differentiation. Promotes tissue regeneration after injury or trauma. After heart damage negatively regulates the recruitment of inflammatory cells and mediates cell survival through activation of anti-apoptotic signaling pathways via MAPKs and AKT pathways through the activation of angiogenesis. Also facilitates liver regeneration as well as bone repair by recruiting macrophage at trauma site and by promoting cartilage development by facilitating chondrocyte differentiation. Plays a role in brain by promoting neural precursor cells survival and growth through interaction with heparan sulfate proteoglycans. Binds PTPRZ1 and promotes neuronal migration and embryonic neurons survival. Binds SDC3 or GPC2 and mediates neurite outgrowth and cell adhesion. Binds chondroitin sulfate E and heparin leading to inhibition of neuronal cell adhesion induced by binding with GPC2. Binds CSPG5 and promotes elongation of oligodendroglial precursor-like cells. Also binds ITGA6:ITGB1 complex; this interaction mediates MDK-induced neurite outgrowth. Binds LRP1; promotes neuronal survival. Binds ITGA4:ITGB1 complex; this interaction mediates MDK-induced osteoblast cells migration through PXN phosphorylation. Binds anaplastic lymphoma kinase (ALK) which induces ALK activation and subsequent phosphorylation of the insulin receptor substrate (IRS1), followed by the activation of mitogen-activated protein kinase (MAPK) and PI3-kinase, and the induction of cell proliferation. Promotes epithelial to mesenchymal transition through interaction with NOTCH2. During arteriogenesis, plays a role in vascular endothelial cell proliferation by inducing VEGFA expression and release which in turn induces nitric oxide synthase expression. Moreover activates vasodilation through nitric oxide synthase activation. Negatively regulates bone formation in response to mechanical load by inhibiting Wnt/beta-catenin signaling in osteoblasts. In addition plays a role in hippocampal development, working memory, auditory response, early fetal adrenal gland development and the female reproductive system. In Mus musculus (Mouse), this protein is Midkine.